The primary structure comprises 497 residues: Serine carboxypeptidase-like 20 (497 aa).

The signal sequence occupies residues 1-29 (MSIITMVWLMKVFVFVTLLSLVFVITESA). 3 cysteine pairs are disulfide-bonded: C90/C386, C254/C266, and C289/C353. N-linked (GlcNAc...) asparagine glycans are attached at residues N111 and N146. The active site involves S186. N249 carries N-linked (GlcNAc...) asparagine glycosylation. An N-linked (GlcNAc...) asparagine glycan is attached at N405. D421 is an active-site residue. N-linked (GlcNAc...) asparagine glycosylation occurs at N463. H474 is a catalytic residue. The Microbody targeting signal signature appears at 495–497 (SKI).

Belongs to the peptidase S10 family. In terms of tissue distribution, ubiquitous.

It localises to the secreted. In terms of biological role, probable carboxypeptidase. This is Serine carboxypeptidase-like 20 (SCPL20) from Arabidopsis thaliana (Mouse-ear cress).